Reading from the N-terminus, the 508-residue chain is Light-independent protochlorophyllide reductase subunit B (508 aa).

Asp-36 serves as a coordination point for [4Fe-4S] cluster. Asp-294 functions as the Proton donor in the catalytic mechanism. Gly-429–Met-430 serves as a coordination point for substrate.

Belongs to the ChlB/BchB/BchZ family. In terms of assembly, protochlorophyllide reductase is composed of three subunits; ChlL, ChlN and ChlB. Forms a heterotetramer of two ChlB and two ChlN subunits. It depends on [4Fe-4S] cluster as a cofactor.

It catalyses the reaction chlorophyllide a + oxidized 2[4Fe-4S]-[ferredoxin] + 2 ADP + 2 phosphate = protochlorophyllide a + reduced 2[4Fe-4S]-[ferredoxin] + 2 ATP + 2 H2O. It functions in the pathway porphyrin-containing compound metabolism; chlorophyll biosynthesis (light-independent). Functionally, component of the dark-operative protochlorophyllide reductase (DPOR) that uses Mg-ATP and reduced ferredoxin to reduce ring D of protochlorophyllide (Pchlide) to form chlorophyllide a (Chlide). This reaction is light-independent. The NB-protein (ChlN-ChlB) is the catalytic component of the complex. In Nostoc punctiforme (strain ATCC 29133 / PCC 73102), this protein is Light-independent protochlorophyllide reductase subunit B.